Reading from the N-terminus, the 678-residue chain is Glycine--tRNA ligase beta subunit (678 aa).

The protein belongs to the class-II aminoacyl-tRNA synthetase family. As to quaternary structure, tetramer of two alpha and two beta subunits.

Its subcellular location is the cytoplasm. The enzyme catalyses tRNA(Gly) + glycine + ATP = glycyl-tRNA(Gly) + AMP + diphosphate. This chain is Glycine--tRNA ligase beta subunit, found in Streptococcus pneumoniae (strain Taiwan19F-14).